Consider the following 1115-residue polypeptide: PAN2-PAN3 deadenylation complex catalytic subunit PAN2 (1115 aa).

5 WD repeats span residues 27 to 66 (NRDK…YTRY), 112 to 153 (AAFS…GCLD), 155 to 194 (LLNY…TIKS), 197 to 236 (AHSA…YDLR), and 295 to 334 (HPCQ…MGMF). Residues 337–473 (TPEMLAYPDY…IQTYTSINKY (137 aa)) are linker. The USP domain maps to 474 to 855 (EVPPAYSRLP…TPEIIIYCDA (382 aa)). The Zn(2+) site is built by Cys-660, His-662, Cys-713, and Cys-716. Residues 907 to 1079 (VAIDAEFVSL…EDAHTALILY (173 aa)) form the Exonuclease domain. A divalent metal cation is bound by residues Asp-910, Glu-912, Asp-1020, and Asp-1071.

Belongs to the peptidase C19 family. PAN2 subfamily. In terms of assembly, forms a heterotrimer with an asymmetric homodimer of the regulatory subunit PAN3 to form the poly(A)-nuclease (PAN) deadenylation complex. A divalent metal cation serves as cofactor.

Its subcellular location is the cytoplasm. The enzyme catalyses Exonucleolytic cleavage of poly(A) to 5'-AMP.. With respect to regulation, positively regulated by the regulatory subunit PAN3. Negatively regulated by PAB1-binding protein PBP1. Inhibited under stress conditions. Inhibition of deadenylation under stress increases mRNA stability, which may be a mechanism to retain the majority of the cytoplasmic pool of mRNAs for later reuse and recovery from stress. Functionally, catalytic subunit of the poly(A)-nuclease (PAN) deadenylation complex, one of two cytoplasmic mRNA deadenylases involved in mRNA turnover. PAN specifically shortens poly(A) tails of RNA and the activity is stimulated by poly(A)-binding protein PAB1. PAN deadenylation is followed by rapid degradation of the shortened mRNA tails by the CCR4-NOT complex. Deadenylated mRNAs are then degraded by two alternative mechanisms, namely exosome-mediated 3'-5' exonucleolytic degradation, or deadenylation-dependent mRNA decaping by DCP1-DCP2 and subsequent 5'-3' exonucleolytic degradation by XRN1. May also be involved in post-transcriptional maturation of mRNA poly(A) tails, trimming the tails from their synthesized length to the slightly shorter, apparently messenger-specific length found on newly exported mRNAs. PAN cooperates with protein kinase DUN1 in the regulation of RAD5 mRNA levels and cell survival in response to replicational stress. The chain is PAN2-PAN3 deadenylation complex catalytic subunit PAN2 from Saccharomyces cerevisiae (strain ATCC 204508 / S288c) (Baker's yeast).